Reading from the N-terminus, the 114-residue chain is NTGGKAPRKHIAHKQAKKSSAAAATGGVKKPHRFRPGTVALREIRRFQKSTELLIRKLPFQRLVREIASEFKNDLRFQSSAVLALQEASEAYLVGLFEDTNLAAIHAKRVTIMP.

Positions 1–17 are enriched in basic residues; that stretch reads NTGGKAPRKHIAHKQAK. Residues 1–32 form a disordered region; it reads NTGGKAPRKHIAHKQAKKSSAAAATGGVKKPH. Residues 18–28 show a composition bias toward low complexity; sequence KSSAAAATGGV.

Belongs to the histone H3 family. As to quaternary structure, the nucleosome is a histone octamer containing two molecules each of H2A, H2B, H3 and H4 assembled in one H3-H4 heterotetramer and two H2A-H2B heterodimers. The octamer wraps approximately 147 bp of DNA.

The protein resides in the nucleus. Its subcellular location is the chromosome. Its function is as follows. Core component of nucleosome. Nucleosomes wrap and compact DNA into chromatin, limiting DNA accessibility to the cellular machineries which require DNA as a template. Histones thereby play a central role in transcription regulation, DNA repair, DNA replication and chromosomal stability. DNA accessibility is regulated via a complex set of post-translational modifications of histones, also called histone code, and nucleosome remodeling. The chain is Histone H3-7 (H3-7) from Stylonychia lemnae (Ciliate).